Here is a 445-residue protein sequence, read N- to C-terminus: MSNRKYFGTDGVRGKVGDTPITPDFVLKLGWAAGKVLARHGSRKIIIGKDTRISGYMLESALEAGLAAAGLSASFTGPMPTPAVAYLTRTFRAEAGIVISASHNPYYDNGIKFFSIDGTKLPDEVEEAIEAELEKPLTCVESAELGKASRIVDAAGRYIEFCKGTFPSELSLNGLKIVVDCANGATYHIAPSVLRELGAKVIAIGCEPDGMNINEECGATDVRQLQARVLAEKADVGLAFDGDGDRLIMVDHLGNKVDGDQILYIIAREGLRQGQLRGGAVGTLMSNMGLEVALKQLGIPFARAKVGDRYVLEMMQAKGWRIGAENSGHVILLDKTTTGDGVIAGLQVLTAIVRNHMSLHDLCSGMKLFPQILVNVRFTGENDPLEDKKVQQITQDVEKELAGRGRVLLRKSGTEPLIRVMVEGEHEETVIALANRIADAVKAAG.

Ser-102 (phosphoserine intermediate) is an active-site residue. The Mg(2+) site is built by Ser-102, Asp-241, Asp-243, and Asp-245. Ser-102 carries the phosphoserine modification.

The protein belongs to the phosphohexose mutase family. The cofactor is Mg(2+). Activated by phosphorylation.

It catalyses the reaction alpha-D-glucosamine 1-phosphate = D-glucosamine 6-phosphate. Catalyzes the conversion of glucosamine-6-phosphate to glucosamine-1-phosphate. The sequence is that of Phosphoglucosamine mutase from Pectobacterium carotovorum subsp. carotovorum (strain PC1).